Consider the following 240-residue polypeptide: Large ribosomal subunit protein uL2 (240 aa).

The span at 1–10 shows a compositional bias: polar residues; that stretch reads MGHRISTQSR. Disordered regions lie at residues 1–20 and 204–240; these read MGHR…YRAP and FGGG…GYRR.

It belongs to the universal ribosomal protein uL2 family. In terms of assembly, part of the 50S ribosomal subunit. Forms a bridge to the 30S subunit in the 70S ribosome.

One of the primary rRNA binding proteins. Required for association of the 30S and 50S subunits to form the 70S ribosome, for tRNA binding and peptide bond formation. It has been suggested to have peptidyltransferase activity; this is somewhat controversial. Makes several contacts with the 16S rRNA in the 70S ribosome. In Methanocorpusculum labreanum (strain ATCC 43576 / DSM 4855 / Z), this protein is Large ribosomal subunit protein uL2.